Reading from the N-terminus, the 360-residue chain is Alanine racemase (360 aa).

Lys34 (proton acceptor; specific for D-alanine) is an active-site residue. Lys34 bears the N6-(pyridoxal phosphate)lysine mark. Arg129 is a substrate binding site. Tyr254 (proton acceptor; specific for L-alanine) is an active-site residue. Substrate is bound at residue Met302.

The protein belongs to the alanine racemase family. Requires pyridoxal 5'-phosphate as cofactor.

It catalyses the reaction L-alanine = D-alanine. Its pathway is amino-acid biosynthesis; D-alanine biosynthesis; D-alanine from L-alanine: step 1/1. Catalyzes the interconversion of L-alanine and D-alanine. May also act on other amino acids. This is Alanine racemase (alr) from Pectobacterium atrosepticum (strain SCRI 1043 / ATCC BAA-672) (Erwinia carotovora subsp. atroseptica).